A 142-amino-acid polypeptide reads, in one-letter code: Transcriptional regulator MraZ (142 aa).

SpoVT-AbrB domains lie at 5 to 51 (ASSL…PRPE) and 77 to 120 (AMDV…DKAS).

The protein belongs to the MraZ family. As to quaternary structure, forms oligomers.

Its subcellular location is the cytoplasm. It localises to the nucleoid. The chain is Transcriptional regulator MraZ from Verminephrobacter eiseniae (strain EF01-2).